Here is a 434-residue protein sequence, read N- to C-terminus: Ribosomal RNA-processing protein 14 (434 aa).

Position 2 is an N-acetylserine (Ser-2). Composition is skewed to basic and acidic residues over residues 32 to 58 (KSQEQWKAKKKTKEQSKNDKLKKLDPE), 70 to 79 (VMKKKEKDAK), and 95 to 105 (KQKEATSKVEG). The tract at residues 32-257 (KSQEQWKAKK…RFKKGKKDSE (226 aa)) is disordered. Positions 121-140 (PDEDEEEEEDIKVIFDDEGN) are enriched in acidic residues. Positions 144–178 (LESKKDTTEPDRSVEKKSITEEEKLQRKKNLEALR) are enriched in basic and acidic residues. 2 coiled-coil regions span residues 162–230 (ITEE…EIAS) and 293–360 (AKND…QKRK). Positions 220–241 (EQEQDQDEIASDSDMEDIDSDL) are enriched in acidic residues. A compositionally biased stretch (basic and acidic residues) spans 375–392 (TISERQKRREENLRIRKD). Positions 375 to 434 (TISERQKRREENLRIRKDNKGKKRNKQEKMKRKYVGSAVPKKRAGFEGRLKTGKKKGGPK) are disordered. 2 stretches are compositionally biased toward basic residues: residues 393 to 408 (NKGKKRNKQEKMKRKY) and 425 to 434 (KTGKKKGGPK).

This sequence belongs to the SURF6 family. As to quaternary structure, component of the 90S and 60S pre-ribosomal particles.

The protein localises to the nucleus. It localises to the nucleolus. Functionally, involved in ribosome biogenesis and cell polarity. Required for the synthesis of both 40S and 60S ribosomal subunits and may also play some direct role in correct positioning of the mitotic spindle during mitosis. The protein is Ribosomal RNA-processing protein 14 (RRP14) of Saccharomyces cerevisiae (strain ATCC 204508 / S288c) (Baker's yeast).